The chain runs to 362 residues: Ribosome-binding ATPase YchF (362 aa).

An OBG-type G domain is found at 2–258; the sequence is LSAGIVGLPN…LDANGRQDWL (257 aa). 11-16 lines the ATP pocket; sequence NVGKST. Mg(2+) contacts are provided by serine 15 and threonine 35. The TGS domain maps to 281 to 347; the sequence is GLWSFFTFGK…EAKKQGLVRL (67 aa).

Belongs to the TRAFAC class OBG-HflX-like GTPase superfamily. OBG GTPase family. YchF/OLA1 subfamily. Mg(2+) serves as cofactor.

Functionally, ATPase that binds to both the 70S ribosome and the 50S ribosomal subunit in a nucleotide-independent manner. The protein is Ribosome-binding ATPase YchF of Mycoplasma pneumoniae (strain ATCC 29342 / M129 / Subtype 1) (Mycoplasmoides pneumoniae).